Here is a 259-residue protein sequence, read N- to C-terminus: Imidazole glycerol phosphate synthase subunit HisF (259 aa).

Residues Asp-11 and Asp-130 contribute to the active site.

The protein belongs to the HisA/HisF family. As to quaternary structure, heterodimer of HisH and HisF.

It is found in the cytoplasm. The enzyme catalyses 5-[(5-phospho-1-deoxy-D-ribulos-1-ylimino)methylamino]-1-(5-phospho-beta-D-ribosyl)imidazole-4-carboxamide + L-glutamine = D-erythro-1-(imidazol-4-yl)glycerol 3-phosphate + 5-amino-1-(5-phospho-beta-D-ribosyl)imidazole-4-carboxamide + L-glutamate + H(+). It participates in amino-acid biosynthesis; L-histidine biosynthesis; L-histidine from 5-phospho-alpha-D-ribose 1-diphosphate: step 5/9. Its function is as follows. IGPS catalyzes the conversion of PRFAR and glutamine to IGP, AICAR and glutamate. The HisF subunit catalyzes the cyclization activity that produces IGP and AICAR from PRFAR using the ammonia provided by the HisH subunit. The protein is Imidazole glycerol phosphate synthase subunit HisF of Syntrophobacter fumaroxidans (strain DSM 10017 / MPOB).